We begin with the raw amino-acid sequence, 664 residues long: UV-stimulated scaffold protein A homolog (664 aa).

The tract at residues 10-153 (KVIGLIEKAT…LKNTLKLKFP (144 aa)) is VHS-like. Residues 148-180 (LKLKFPDLQANAARIQRERQEREMKTKEILRNK) adopt a coiled-coil conformation. 2 disordered regions span residues 330-350 (HGNE…DGKV) and 362-403 (MRTQ…GNSL). Over residues 334 to 347 (ETNEEEEDIWEEDD) the composition is skewed to acidic residues. A compositionally biased stretch (polar residues) spans 363 to 374 (RTQQSENSSLPS). Basic and acidic residues predominate over residues 377–387 (EAKKSTSEARS). Over residues 388–402 (NKVSNTKKVGSSGNS) the composition is skewed to polar residues. The UVSSA-type zinc-finger motif lies at 473-500 (TPPCRASLKKGGLCQRRDLRVCPFHGPI). Residues cysteine 476, cysteine 486, cysteine 494, and histidine 497 each contribute to the Zn(2+) site. Disordered stretches follow at residues 514–546 (SPLD…DPNQ) and 640–664 (VKGT…ANQW). Composition is skewed to polar residues over residues 521 to 533 (NQTS…NQDV) and 640 to 650 (VKGTNPQQLAQ).

It belongs to the UVSSA family.

The protein resides in the chromosome. This chain is UV-stimulated scaffold protein A homolog, found in Arabidopsis thaliana (Mouse-ear cress).